The primary structure comprises 372 residues: UDP-2-acetamido-2,6-beta-L-arabino-hexul-4-ose reductase (372 aa).

NAD(+) is bound by residues 7–30 (GANG…EVVP), Leu-53, Tyr-103, and Lys-107. Tyr-103 (proton acceptor) is an active-site residue. Substrate is bound by residues Asn-132 and 279–282 (HPGV).

It belongs to the NAD(P)-dependent epimerase/dehydratase family. In terms of assembly, homodimer.

It carries out the reaction UDP-2-acetamido-2,6-dideoxy-beta-L-arabino-hex-4-ulose + NADH + H(+) = UDP-2-acetamido-2,6-dideoxy-beta-L-talose + NAD(+). It catalyses the reaction UDP-2-acetamido-2,6-dideoxy-beta-L-arabino-hex-4-ulose + NADPH + H(+) = UDP-2-acetamido-2,6-dideoxy-beta-L-talose + NADP(+). It functions in the pathway bacterial outer membrane biogenesis; LPS O-antigen biosynthesis. Functionally, bifunctional enzyme that mediates C-3 epimerization of the second intermediate followed by reduction at C-4 during serogroup O11 O-antigen biosynthesis, thus catalyzing the conversion of UDP-N-acetyl-D-glucosamine to precursors for the biosynthesis of O antigen. The sequence is that of UDP-2-acetamido-2,6-beta-L-arabino-hexul-4-ose reductase from Pseudomonas aeruginosa (strain ATCC 29260 / BCRC 12902 / CIP 102967 / NCIMB 11965 / PA103).